The following is a 465-amino-acid chain: Ribulose bisphosphate carboxylase large chain (465 aa).

Lysine 4 bears the N6,N6,N6-trimethyllysine mark. The substrate site is built by asparagine 113 and threonine 163. The active-site Proton acceptor is the lysine 165. Lysine 167 provides a ligand contact to substrate. Mg(2+) contacts are provided by lysine 191, aspartate 193, and glutamate 194. An N6-carboxylysine modification is found at lysine 191. Catalysis depends on histidine 284, which acts as the Proton acceptor. 3 residues coordinate substrate: arginine 285, histidine 317, and serine 369.

The protein belongs to the RuBisCO large chain family. Type I subfamily. As to quaternary structure, heterohexadecamer of 8 large chains and 8 small chains; disulfide-linked. The disulfide link is formed within the large subunit homodimers. Requires Mg(2+) as cofactor. In terms of processing, the disulfide bond which can form in the large chain dimeric partners within the hexadecamer appears to be associated with oxidative stress and protein turnover.

It is found in the plastid. It localises to the chloroplast. It carries out the reaction 2 (2R)-3-phosphoglycerate + 2 H(+) = D-ribulose 1,5-bisphosphate + CO2 + H2O. It catalyses the reaction D-ribulose 1,5-bisphosphate + O2 = 2-phosphoglycolate + (2R)-3-phosphoglycerate + 2 H(+). RuBisCO catalyzes two reactions: the carboxylation of D-ribulose 1,5-bisphosphate, the primary event in carbon dioxide fixation, as well as the oxidative fragmentation of the pentose substrate in the photorespiration process. Both reactions occur simultaneously and in competition at the same active site. The sequence is that of Ribulose bisphosphate carboxylase large chain from Idesia polycarpa (Iigiri tree).